Reading from the N-terminus, the 291-residue chain is Elongation factor Ts (291 aa).

Positions 79–82 (TDFV) are involved in Mg(2+) ion dislocation from EF-Tu.

The protein belongs to the EF-Ts family.

The protein resides in the cytoplasm. In terms of biological role, associates with the EF-Tu.GDP complex and induces the exchange of GDP to GTP. It remains bound to the aminoacyl-tRNA.EF-Tu.GTP complex up to the GTP hydrolysis stage on the ribosome. The protein is Elongation factor Ts of Jannaschia sp. (strain CCS1).